The chain runs to 251 residues: Triosephosphate isomerase (251 aa).

9 to 11 (NWK) is a binding site for substrate. Catalysis depends on H95, which acts as the Electrophile. E167 serves as the catalytic Proton acceptor. Substrate contacts are provided by residues G173, S213, and 234–235 (GG). S213 carries the phosphoserine modification.

This sequence belongs to the triosephosphate isomerase family. As to quaternary structure, homodimer.

It localises to the cytoplasm. The enzyme catalyses D-glyceraldehyde 3-phosphate = dihydroxyacetone phosphate. Its pathway is carbohydrate biosynthesis; gluconeogenesis. It functions in the pathway carbohydrate degradation; glycolysis; D-glyceraldehyde 3-phosphate from glycerone phosphate: step 1/1. In terms of biological role, involved in the gluconeogenesis. Catalyzes stereospecifically the conversion of dihydroxyacetone phosphate (DHAP) to D-glyceraldehyde-3-phosphate (G3P). This Bacillus cytotoxicus (strain DSM 22905 / CIP 110041 / 391-98 / NVH 391-98) protein is Triosephosphate isomerase.